The chain runs to 627 residues: Pro-interleukin-16 (627 aa).

Disordered stretches follow at residues 34–136, 162–267, and 316–337; these read HMPL…SIKQ, SSGE…LTRS, and GASP…ETSG. Residue S217 is modified to Phosphoserine. Over residues 318–337 the composition is skewed to polar residues; that stretch reads SPTSLSNEDSAANGCAETSG. An interaction with PPP1R12A, PPP1R12B and PPP1R12C region spans residues 401–497; it reads KQLDSIHVTI…IVTRKLTPET (97 aa). PDZ domains lie at 407–492 and 529–614; these read HVTI…VTRK and TVTL…IKRK.

Homotetramer. Pro-interleukin-16 interacts (via PDZ 2 domain) with PPP1R12A, PPP1R12B and PPP1R12C. Pro-interleukin-16 interacts with GRIN2A. Pro-interleukin-16 interacts with GABPB1. Pro-interleukin-16 interacts (via PDZ 3 domain) with HDAC3.

It is found in the secreted. The protein localises to the cytoplasm. Its subcellular location is the nucleus. In terms of biological role, interleukin-16 stimulates a migratory response in CD4+ lymphocytes, monocytes, and eosinophils. Primes CD4+ T-cells for IL-2 and IL-15 responsiveness. Also induces T-lymphocyte expression of interleukin 2 receptor. Ligand for CD4. Its function is as follows. Pro-interleukin-16 is involved in cell cycle progression in T-cells. Appears to be involved in transcriptional regulation of SKP2 and is probably part of a transcriptional repression complex on the core promoter of the SKP2 gene. May act as a scaffold for GABPB1 (the DNA-binding subunit the GABP transcription factor complex) and HDAC3 thus maintaining transcriptional repression and blocking cell cycle progression in resting T-cells. The chain is Pro-interleukin-16 (IL16) from Saimiri sciureus (Common squirrel monkey).